Consider the following 397-residue polypeptide: 4-hydroxyphenylpyruvate dioxygenase (397 aa).

2 consecutive VOC domains span residues 18–149 (NFHH…FVEY) and 181–339 (FIDH…IFTK). Fe cation is bound by residues histidine 184, histidine 267, and glutamate 350.

This sequence belongs to the 4HPPD family. Homodimer. Fe cation is required as a cofactor.

It is found in the cytoplasm. The protein localises to the endoplasmic reticulum membrane. It localises to the golgi apparatus membrane. It carries out the reaction 3-(4-hydroxyphenyl)pyruvate + O2 = homogentisate + CO2. It functions in the pathway amino-acid degradation; L-phenylalanine degradation; acetoacetate and fumarate from L-phenylalanine: step 3/6. Catalyzes the conversion of 4-hydroxyphenylpyruvic acid to homogentisic acid, one of the steps in tyrosine catabolism. The polypeptide is 4-hydroxyphenylpyruvate dioxygenase (hpd) (Danio rerio (Zebrafish)).